Reading from the N-terminus, the 140-residue chain is MTVTIYHNPACGTSRNTLAMIRNAGIEPTVVEYLKNPPSRAELEAMIAAAGLTVRQAIREKGTPFAELGLGDPSRSDEELLDAMLEHPILINRPFVVAPLGTRLCRPSEVVLDILPDTHKGPFSKEDGEAVLDAGGKRIV.

Catalysis depends on Cys11, which acts as the Nucleophile; cysteine thioarsenate intermediate.

The protein belongs to the ArsC family.

The catalysed reaction is [glutaredoxin]-dithiol + arsenate + glutathione + H(+) = glutathionyl-S-S-[glutaredoxin] + arsenite + H2O. In terms of biological role, involved in resistance to arsenate. Catalyzes the reduction of arsenate [As(V)] to arsenite [As(III)]. The resulting arsenite is then extruded from the cell via the aquaglyceroporin AqpS. Does not display antimonate reductase activity. The chain is Arsenate reductase from Rhizobium meliloti (strain 1021) (Ensifer meliloti).